The primary structure comprises 283 residues: Phospholipase C (283 aa).

The first 24 residues, 1 to 24 (MKKKVLALAAAITVVAPLQSVAFA), serve as a signal peptide directing secretion. A propeptide spanning residues 25 to 38 (HENDGGSKIKIVHR) is cleaved from the precursor. Residues W39, H52, D93, H107, H156, D160, H166, H180, and E184 each contribute to the Zn(2+) site. The 245-residue stretch at 39 to 283 (WSAEDKHKEG…QLWFDTYGDR (245 aa)) folds into the Zn-dependent PLC domain.

The protein belongs to the bacterial zinc-metallophospholipase C family. As to quaternary structure, monomer. The cofactor is Zn(2+).

The enzyme catalyses a 1,2-diacyl-sn-glycero-3-phosphocholine + H2O = phosphocholine + a 1,2-diacyl-sn-glycerol + H(+). Required, with sphingomyelinase, to effect target cell lysis (hemolysis). The chain is Phospholipase C (plc) from Bacillus cereus.